The primary structure comprises 404 residues: Cysteine desulfurase IscS (404 aa).

Residues 75–76 (AT), Asn155, Gln183, and 203–205 (SGH) contribute to the pyridoxal 5'-phosphate site. At Lys206 the chain carries N6-(pyridoxal phosphate)lysine. Residue Thr243 coordinates pyridoxal 5'-phosphate. Cys328 serves as the catalytic Cysteine persulfide intermediate. Cys328 is a [2Fe-2S] cluster binding site.

This sequence belongs to the class-V pyridoxal-phosphate-dependent aminotransferase family. NifS/IscS subfamily. In terms of assembly, homodimer. Forms a heterotetramer with IscU, interacts with other sulfur acceptors. Pyridoxal 5'-phosphate is required as a cofactor.

The protein localises to the cytoplasm. The catalysed reaction is (sulfur carrier)-H + L-cysteine = (sulfur carrier)-SH + L-alanine. It functions in the pathway cofactor biosynthesis; iron-sulfur cluster biosynthesis. Master enzyme that delivers sulfur to a number of partners involved in Fe-S cluster assembly, tRNA modification or cofactor biosynthesis. Catalyzes the removal of elemental sulfur atoms from cysteine to produce alanine. Functions as a sulfur delivery protein for Fe-S cluster synthesis onto IscU, an Fe-S scaffold assembly protein, as well as other S acceptor proteins. This chain is Cysteine desulfurase IscS, found in Klebsiella pneumoniae (strain 342).